A 111-amino-acid chain; its full sequence is RNA polymerase-binding protein RbpA (111 aa).

It belongs to the RNA polymerase-binding protein RbpA family. Forms a complex with the RNAP catalytic core and with free principal sigma factors.

Binds to RNA polymerase (RNAP), stimulating transcription from principal, but not alternative sigma factor promoters. The polypeptide is RNA polymerase-binding protein RbpA (Mycobacterium tuberculosis (strain CDC 1551 / Oshkosh)).